Here is a 314-residue protein sequence, read N- to C-terminus: Deoxymugineic acid synthase 1-D (314 aa).

The interval 1–21 (MGAGEKTAAGMPRIGMGTAVQ) is disordered. Asp-44 is a binding site for NADP(+). Tyr-49 acts as the Proton donor in catalysis. Position 112 (His-112) interacts with substrate. Residues 158–159 (AN), Gln-180, 258–266 (FDEARMREN), and 273–281 (ELTEEERLR) contribute to the NADP(+) site.

The protein belongs to the aldo/keto reductase family. In terms of tissue distribution, mostly expressed in root tissues, observed, at low levels, in mesocotyl and embryonic roots, seedling roots, crown and seedling leafes, mature bracts, anthers, pistil, caryopsis and embryos.

It catalyses the reaction 2'-deoxymugineate + NAD(+) = 3''-deamino-3''-oxonicotianamine + NADH + H(+). It carries out the reaction 2'-deoxymugineate + NADP(+) = 3''-deamino-3''-oxonicotianamine + NADPH + H(+). It participates in siderophore biosynthesis. In terms of biological role, catalyzes the reduction of a 3''-keto intermediate during the biosynthesis of 2'-deoxymugineic acid (DMA) from L-Met. Involved in the formation of phytosiderophores (MAs) belonging to the mugineic acid family and required to acquire iron. The chain is Deoxymugineic acid synthase 1-D from Triticum aestivum (Wheat).